Reading from the N-terminus, the 122-residue chain is Co-chaperonin GroES (122 aa).

This sequence belongs to the GroES chaperonin family. As to quaternary structure, heptamer of 7 subunits arranged in a ring. Interacts with the chaperonin GroEL.

The protein localises to the cytoplasm. Together with the chaperonin GroEL, plays an essential role in assisting protein folding. The GroEL-GroES system forms a nano-cage that allows encapsulation of the non-native substrate proteins and provides a physical environment optimized to promote and accelerate protein folding. GroES binds to the apical surface of the GroEL ring, thereby capping the opening of the GroEL channel. This Aquifex aeolicus (strain VF5) protein is Co-chaperonin GroES.